The sequence spans 123 residues: Small ribosomal subunit protein uS12 (123 aa).

At Asp89 the chain carries 3-methylthioaspartic acid.

It belongs to the universal ribosomal protein uS12 family. In terms of assembly, part of the 30S ribosomal subunit. Contacts proteins S8 and S17. May interact with IF1 in the 30S initiation complex.

With S4 and S5 plays an important role in translational accuracy. Its function is as follows. Interacts with and stabilizes bases of the 16S rRNA that are involved in tRNA selection in the A site and with the mRNA backbone. Located at the interface of the 30S and 50S subunits, it traverses the body of the 30S subunit contacting proteins on the other side and probably holding the rRNA structure together. The combined cluster of proteins S8, S12 and S17 appears to hold together the shoulder and platform of the 30S subunit. The chain is Small ribosomal subunit protein uS12 from Bradyrhizobium diazoefficiens (strain JCM 10833 / BCRC 13528 / IAM 13628 / NBRC 14792 / USDA 110).